We begin with the raw amino-acid sequence, 473 residues long: Photosystem II CP43 reaction center protein (473 aa).

The propeptide occupies 1-14 (MKTLYSLRRFYPVE). Threonine 15 is subject to N-acetylthreonine. Position 15 is a phosphothreonine (threonine 15). Helical transmembrane passes span 69 to 93 (LFEV…PHLA), 134 to 155 (LIGP…KDKN), 178 to 200 (KALY…RKIT), 255 to 275 (KPFA…LSYS), and 291 to 312 (WFNN…ASQA). Residue glutamate 367 coordinates [CaMn4O5] cluster. Residues 447-471 (RARAAAAGFEKGIDRDTEPVLSMTP) traverse the membrane as a helical segment.

This sequence belongs to the PsbB/PsbC family. PsbC subfamily. In terms of assembly, PSII is composed of 1 copy each of membrane proteins PsbA, PsbB, PsbC, PsbD, PsbE, PsbF, PsbH, PsbI, PsbJ, PsbK, PsbL, PsbM, PsbT, PsbX, PsbY, PsbZ, Psb30/Ycf12, at least 3 peripheral proteins of the oxygen-evolving complex and a large number of cofactors. It forms dimeric complexes. Binds multiple chlorophylls and provides some of the ligands for the Ca-4Mn-5O cluster of the oxygen-evolving complex. It may also provide a ligand for a Cl- that is required for oxygen evolution. PSII binds additional chlorophylls, carotenoids and specific lipids. serves as cofactor.

The protein resides in the plastid. It is found in the chloroplast thylakoid membrane. Functionally, one of the components of the core complex of photosystem II (PSII). It binds chlorophyll and helps catalyze the primary light-induced photochemical processes of PSII. PSII is a light-driven water:plastoquinone oxidoreductase, using light energy to abstract electrons from H(2)O, generating O(2) and a proton gradient subsequently used for ATP formation. In Angiopteris evecta (Mule's foot fern), this protein is Photosystem II CP43 reaction center protein.